Reading from the N-terminus, the 462-residue chain is 3-ketoacyl CoA thiolase 1, peroxisomal (462 aa).

Residues 1 to 34 constitute a peroxisome transit peptide; sequence MEKAIQRQRVLLEHLQPIRHHTHDHSSSLTTSIC. Cys138 acts as the Acyl-thioester intermediate in catalysis. Residues His393 and Cys425 each act as proton acceptor in the active site. Residue Gly427 participates in substrate binding.

This sequence belongs to the thiolase-like superfamily. Thiolase family. Homodimer.

Its subcellular location is the peroxisome. It catalyses the reaction an acyl-CoA + acetyl-CoA = a 3-oxoacyl-CoA + CoA. It functions in the pathway aromatic compound metabolism. The protein operates within lipid metabolism; fatty acid metabolism. Functionally, component of the floral volatile benzenoid/phenylpropanoid (FVBP) biosynthetic pathway. Thiolase that catalyzes the conversion of 3-oxo-3-phenylpropionyl-CoA (benzoylacetyl-CoA) to benzoyl-CoA. The chain is 3-ketoacyl CoA thiolase 1, peroxisomal from Petunia hybrida (Petunia).